The chain runs to 90 residues: DNA-directed RNA polymerase subunit omega (90 aa).

This sequence belongs to the RNA polymerase subunit omega family. The RNAP catalytic core consists of 2 alpha, 1 beta, 1 beta' and 1 omega subunit. When a sigma factor is associated with the core the holoenzyme is formed, which can initiate transcription.

The catalysed reaction is RNA(n) + a ribonucleoside 5'-triphosphate = RNA(n+1) + diphosphate. Promotes RNA polymerase assembly. Latches the N- and C-terminal regions of the beta' subunit thereby facilitating its interaction with the beta and alpha subunits. This is DNA-directed RNA polymerase subunit omega from Rhodopirellula baltica (strain DSM 10527 / NCIMB 13988 / SH1).